Reading from the N-terminus, the 794-residue chain is 6-hydroxypseudooxynicotine dehydrogenase complex subunit gamma (794 aa).

As to quaternary structure, heterohexamer of 2 alpha (kdhA), 2 beta (kdhB) and 2 gamma (kdhC) subunit. Dimer of heterotrimers. Requires Mo-molybdopterin cytosine dinucleotide as cofactor.

The catalysed reaction is 6-hydroxypseudooxynicotine + A + H2O = 2,6-dihydroxypseudooxynicotine + AH2. It functions in the pathway alkaloid degradation; nicotine degradation. Molybdo-flavoprotein enzyme complex involved in nicotine degradation. The subunit gamma (large subunit) contains the substrate-binding sites, the subunit alpha (medium subunit) binds FAD and the subunit beta (small subunit) has a 2Fe-2S ferredoxin-type domain which binds 2 2Fe-2S clusters. In Paenarthrobacter nicotinovorans (Arthrobacter nicotinovorans), this protein is 6-hydroxypseudooxynicotine dehydrogenase complex subunit gamma (kdhC).